Reading from the N-terminus, the 619-residue chain is Probable ATP-dependent RNA helicase DDX59 (619 aa).

Positions 1 to 101 (MFVPRSLKIK…KSFSKTQRWP (101 aa)) are disordered. Basic and acidic residues predominate over residues 12 to 27 (SSNDDLKSGEAKKSKP). Residue Lys26 forms a Glycyl lysine isopeptide (Lys-Gly) (interchain with G-Cter in SUMO2) linkage. A compositionally biased stretch (polar residues) spans 59–76 (ASSTNSPSCQLAEVSSTG). Position 64 is a phosphoserine (Ser64). Residues 79–91 (EGVKDSHPSEEPV) show a composition bias toward basic and acidic residues. The HIT-type zinc-finger motif lies at 104–133 (GEPVCVVCGRYGEYICDKTDEDVCSLECKA). Ser160 bears the Phosphoserine mark. The Q motif motif lies at 203 to 231 (IDFEHCGFPETLNQNLKKSGYEVPTPIQM). The 172-residue stretch at 234 to 405 (IPVGLLGRDI…DQLLHNPVRI (172 aa)) folds into the Helicase ATP-binding domain. Residue 247–254 (ADTGSGKT) coordinates ATP. A DEAD box motif is present at residues 353 to 356 (DEAD). Positions 416 to 579 (SVRQIILWVE…ILPPQLLNSP (164 aa)) constitute a Helicase C-terminal domain. A compositionally biased stretch (basic and acidic residues) spans 583–594 (EQKRKEQQKDRQ). Positions 583 to 603 (EQKRKEQQKDRQTQNSLVTGA) are disordered.

This sequence belongs to the DEAD box helicase family. DDX59 subfamily. In terms of assembly, interacts (via HIT-type zinc finger) with the RUVBL1/RUVBL2 complex in the presence of ADP.

The protein resides in the cytoplasm. It localises to the nucleus. The catalysed reaction is ATP + H2O = ADP + phosphate + H(+). In Mus musculus (Mouse), this protein is Probable ATP-dependent RNA helicase DDX59 (Ddx59).